We begin with the raw amino-acid sequence, 262 residues long: Hydroxyethylthiazole kinase (262 aa).

Met-44 is a substrate binding site. Arg-118 and Ser-166 together coordinate ATP. Gly-193 contributes to the substrate binding site.

This sequence belongs to the Thz kinase family. Requires Mg(2+) as cofactor.

The catalysed reaction is 5-(2-hydroxyethyl)-4-methylthiazole + ATP = 4-methyl-5-(2-phosphooxyethyl)-thiazole + ADP + H(+). Its pathway is cofactor biosynthesis; thiamine diphosphate biosynthesis; 4-methyl-5-(2-phosphoethyl)-thiazole from 5-(2-hydroxyethyl)-4-methylthiazole: step 1/1. In terms of biological role, catalyzes the phosphorylation of the hydroxyl group of 4-methyl-5-beta-hydroxyethylthiazole (THZ). The sequence is that of Hydroxyethylthiazole kinase from Chlamydia abortus (strain DSM 27085 / S26/3) (Chlamydophila abortus).